The following is a 447-amino-acid chain: Tubulin beta-1 chain (447 aa).

GTP is bound by residues glutamine 11, glutamate 69, serine 138, glycine 142, threonine 143, glycine 144, asparagine 204, and asparagine 226. Glutamate 69 is a Mg(2+) binding site.

It belongs to the tubulin family. As to quaternary structure, dimer of alpha and beta chains. A typical microtubule is a hollow water-filled tube with an outer diameter of 25 nm and an inner diameter of 15 nM. Alpha-beta heterodimers associate head-to-tail to form protofilaments running lengthwise along the microtubule wall with the beta-tubulin subunit facing the microtubule plus end conferring a structural polarity. Microtubules usually have 13 protofilaments but different protofilament numbers can be found in some organisms and specialized cells. Requires Mg(2+) as cofactor.

It localises to the cytoplasm. It is found in the cytoskeleton. Tubulin is the major constituent of microtubules, a cylinder consisting of laterally associated linear protofilaments composed of alpha- and beta-tubulin heterodimers. Microtubules grow by the addition of GTP-tubulin dimers to the microtubule end, where a stabilizing cap forms. Below the cap, tubulin dimers are in GDP-bound state, owing to GTPase activity of alpha-tubulin. This chain is Tubulin beta-1 chain (benA), found in Emericella nidulans (strain FGSC A4 / ATCC 38163 / CBS 112.46 / NRRL 194 / M139) (Aspergillus nidulans).